We begin with the raw amino-acid sequence, 217 residues long: Probable transaldolase (217 aa).

Catalysis depends on Lys83, which acts as the Schiff-base intermediate with substrate.

The protein belongs to the transaldolase family. Type 3B subfamily.

Its subcellular location is the cytoplasm. The catalysed reaction is D-sedoheptulose 7-phosphate + D-glyceraldehyde 3-phosphate = D-erythrose 4-phosphate + beta-D-fructose 6-phosphate. It functions in the pathway carbohydrate degradation; pentose phosphate pathway; D-glyceraldehyde 3-phosphate and beta-D-fructose 6-phosphate from D-ribose 5-phosphate and D-xylulose 5-phosphate (non-oxidative stage): step 2/3. Transaldolase is important for the balance of metabolites in the pentose-phosphate pathway. This is Probable transaldolase from Hydrogenobaculum sp. (strain Y04AAS1).